We begin with the raw amino-acid sequence, 884 residues long: Chondroitin sulfate synthase 3 (884 aa).

Over 1–7 (MAVRSRR) the chain is Cytoplasmic. A helical; Signal-anchor for type II membrane protein transmembrane segment spans residues 8-28 (PWVSVALGLVLGFTAASWLIA). Over 29–884 (PRVAELSEKR…LGVRDNRTLS (856 aa)) the chain is Lumenal. Residues 47 to 164 (YYGRSATGPR…NGSGDGGAAV (118 aa)) form a disordered region. Composition is skewed to low complexity over residues 60-69 (QQLLPQPQSR) and 84-96 (PGPQ…PGGP). Asn-155 and Asn-281 each carry an N-linked (GlcNAc...) asparagine glycan. Residues 437 to 456 (SNSEVSKEDQQLGRTPSFNH) are disordered. Asn-712 carries an N-linked (GlcNAc...) asparagine glycan. 2 residues coordinate a divalent metal cation: Asp-722 and His-836. Asn-880 carries an N-linked (GlcNAc...) asparagine glycan.

This sequence belongs to the chondroitin N-acetylgalactosaminyltransferase family. It depends on Co(2+) as a cofactor. Mn(2+) is required as a cofactor. Cd(2+) serves as cofactor.

It is found in the golgi apparatus. Its subcellular location is the golgi stack membrane. It catalyses the reaction 3-O-(beta-D-GlcA-(1-&gt;3)-beta-D-GalNAc-(1-&gt;4)-beta-D-GlcA-(1-&gt;3)-beta-D-Gal-(1-&gt;3)-beta-D-Gal-(1-&gt;4)-beta-D-Xyl)-L-seryl-[protein] + UDP-N-acetyl-alpha-D-galactosamine = 3-O-(beta-D-GalNAc-(1-&gt;4)-beta-D-GlcA-(1-&gt;3)-beta-D-GalNAc-(1-&gt;4)-beta-D-GlcA-(1-&gt;3)-beta-D-Gal-(1-&gt;3)-beta-D-Gal-(1-&gt;4)-beta-D-Xyl)-L-seryl-[protein] + UDP + H(+). The enzyme catalyses 3-O-{beta-D-GlcA-(1-&gt;3)-[beta-D-GalNAc-(1-&gt;4)-beta-D-GlcA-(1-&gt;3)](n)-beta-D-GalNAc-(1-&gt;4)-beta-D-GlcA-(1-&gt;3)-beta-D-Gal-(1-&gt;3)-beta-D-Gal-(1-&gt;4)-beta-D-Xyl}-L-seryl-[protein] + UDP-N-acetyl-alpha-D-galactosamine = 3-O-{[beta-D-GalNAc-(1-&gt;4)-beta-D-GlcA-(1-&gt;3)](n+1)-beta-D-GalNAc-(1-&gt;4)-beta-D-GlcA-(1-&gt;3)-beta-D-Gal-(1-&gt;3)-beta-D-Gal-(1-&gt;4)-beta-D-Xyl}-L-seryl-[protein] + UDP + H(+). The catalysed reaction is 3-O-(beta-D-GalNAc-(1-&gt;4)-beta-D-GlcA-(1-&gt;3)-beta-D-Gal-(1-&gt;3)-beta-D-Gal-(1-&gt;4)-beta-D-Xyl)-L-seryl-[protein] + UDP-alpha-D-glucuronate = 3-O-(beta-D-GlcA-(1-&gt;3)-beta-D-GalNAc-(1-&gt;4)-beta-D-GlcA-(1-&gt;3)-beta-D-Gal-(1-&gt;3)-beta-D-Gal-(1-&gt;4)-beta-D-Xyl)-L-seryl-[protein] + UDP + H(+). It carries out the reaction 3-O-{[beta-D-GalNAc-(1-&gt;4)-beta-D-GlcA-(1-&gt;3)](n)-beta-D-GalNAc-(1-&gt;4)-beta-D-GlcA-(1-&gt;3)-beta-D-Gal-(1-&gt;3)-beta-D-Gal-(1-&gt;4)-beta-D-Xyl}-L-seryl-[protein] + UDP-alpha-D-glucuronate = 3-O-{beta-D-GlcA-(1-&gt;3)-[beta-D-GalNAc-(1-&gt;4)-beta-D-GlcA-(1-&gt;3)](n)-beta-D-GalNAc-(1-&gt;4)-beta-D-GlcA-(1-&gt;3)-beta-D-Gal-(1-&gt;3)-beta-D-Gal-(1-&gt;4)-beta-D-Xyl}-L-seryl-[protein] + UDP + H(+). In terms of biological role, has both beta-1,3-glucuronic acid and beta-1,4-N-acetylgalactosamine transferase activity. Transfers glucuronic acid (GlcUA) from UDP-GlcUA and N-acetylgalactosamine (GalNAc) from UDP-GalNAc to the non-reducing end of the elongating chondroitin polymer. Specific activity is much reduced compared to CHSY1. This is Chondroitin sulfate synthase 3 (Chsy3) from Mus musculus (Mouse).